A 282-amino-acid chain; its full sequence is Acetylglutamate kinase (282 aa).

Substrate contacts are provided by residues 62-63, R84, and N178; that span reads GG.

It belongs to the acetylglutamate kinase family. ArgB subfamily.

The protein localises to the cytoplasm. It catalyses the reaction N-acetyl-L-glutamate + ATP = N-acetyl-L-glutamyl 5-phosphate + ADP. Its pathway is amino-acid biosynthesis; L-arginine biosynthesis; N(2)-acetyl-L-ornithine from L-glutamate: step 2/4. In terms of biological role, catalyzes the ATP-dependent phosphorylation of N-acetyl-L-glutamate. This is Acetylglutamate kinase from Thermotoga sp. (strain RQ2).